Consider the following 170-residue polypeptide: Ecotin (170 aa).

A signal peptide spans 1–21 (MNKASVVFSGLLMAVSASAIA). An intrachain disulfide couples Cys78 to Cys115.

The protein belongs to the protease inhibitor I11 (ecotin) family. In terms of assembly, homodimer.

The protein resides in the periplasm. General inhibitor of pancreatic serine proteases: inhibits chymotrypsin, trypsin, elastases, factor X, kallikrein as well as a variety of other proteases. In Serratia proteamaculans (strain 568), this protein is Ecotin.